A 795-amino-acid chain; its full sequence is ATP-dependent RNA helicase DHX15 (795 aa).

Residues Met1 to His108 form a disordered region. At Ser15 the chain carries Phosphoserine. Over residues Ala20–Arg62 the composition is skewed to basic and acidic residues. The segment covering Ala79–His108 has biased composition (low complexity). The 167-residue stretch at Thr147–Pro313 folds into the Helicase ATP-binding domain. Gly160–Thr167 contacts ATP. Residues Asp260–His263 carry the DEAH box motif. In terms of domain architecture, Helicase C-terminal spans Thr338–Gly518. Lys488 carries the N6-acetyllysine modification. Residue Lys786 forms a Glycyl lysine isopeptide (Lys-Gly) (interchain with G-Cter in SUMO2) linkage.

It belongs to the DEAD box helicase family. DEAH subfamily. DDX15/PRP43 sub-subfamily. Component of the U11/U12 snRNPs that are part of the U12-type spliceosome. Identified in the Intron Large spliceosome complex (IL, also named intron lariat spliceosome), a post-mRNA release spliceosomal complex containing the excised intron, U2, U5 and U6 snRNPs, and splicing factors; the association may be transient. The IL complex exists in two distinct conformations, one with the DHX15 (ILS2) and one without (ILS1). Interacts with TFIP11 (via G-patch domain); indicative for a recruitment to the IL complex. Interacts with SSB/La. Interacts with GPATCH2 (via G-patch domain); promoting the RNA helicase activity. Interacts with NKRF (via G-patch domain); promoting the RNA helicase activity. Interacts with NLRP6. As to expression, ubiquitous.

The protein resides in the nucleus. Its subcellular location is the nucleolus. The catalysed reaction is ATP + H2O = ADP + phosphate + H(+). With respect to regulation, ATPase activity is enhanced upon binding to G-patch domain-containing proteins. G-patch domain-containing proteins act like a brace that tethers mobile sections of DHX15 together, stabilizing a functional conformation with high RNA affinity, thereby promoting the ATPase activity. RNA helicase involved in mRNA processing and antiviral innate immunity. Pre-mRNA processing factor involved in disassembly of spliceosomes after the release of mature mRNA. In cooperation with TFIP11 seem to be involved in the transition of the U2, U5 and U6 snRNP-containing IL complex to the snRNP-free IS complex leading to efficient debranching and turnover of excised introns. Plays a key role in antiviral innate immunity by promoting both MAVS-dependent signaling and NLRP6 inflammasome. Acts as an RNA virus sensor: recognizes and binds viral double stranded RNA (dsRNA) and activates the MAVS-dependent signaling to produce interferon-beta and interferon lambda-3 (IFNL3). Involved in intestinal antiviral innate immunity together with NLRP6: recognizes and binds viral dsRNA and promotes activation of the NLRP6 inflammasome in intestinal epithelial cells to restrict infection by enteric viruses. The NLRP6 inflammasome acts by promoting maturation and secretion of IL18 in the extracellular milieu. Also involved in antibacterial innate immunity by promoting Wnt-induced antimicrobial protein expression in Paneth cells. In Homo sapiens (Human), this protein is ATP-dependent RNA helicase DHX15.